We begin with the raw amino-acid sequence, 89 residues long: Small ribosomal subunit protein uS15 (89 aa).

The protein belongs to the universal ribosomal protein uS15 family. As to quaternary structure, part of the 30S ribosomal subunit. Forms a bridge to the 50S subunit in the 70S ribosome, contacting the 23S rRNA.

Its function is as follows. One of the primary rRNA binding proteins, it binds directly to 16S rRNA where it helps nucleate assembly of the platform of the 30S subunit by binding and bridging several RNA helices of the 16S rRNA. Forms an intersubunit bridge (bridge B4) with the 23S rRNA of the 50S subunit in the ribosome. This is Small ribosomal subunit protein uS15 from Chlorobium phaeobacteroides (strain BS1).